The sequence spans 440 residues: Xylose isomerase (440 aa).

Residues His101 and Asp104 contribute to the active site. Mg(2+) is bound by residues Glu232, Glu268, His271, Asp296, Asp307, Asp309, and Asp339.

Belongs to the xylose isomerase family. In terms of assembly, homotetramer. The cofactor is Mg(2+).

It is found in the cytoplasm. It carries out the reaction alpha-D-xylose = alpha-D-xylulofuranose. The polypeptide is Xylose isomerase (Escherichia coli (strain SE11)).